The chain runs to 576 residues: Arginine--tRNA ligase (576 aa).

Residues 122 to 132 (PNVAKEMHVGH) carry the 'HIGH' region motif.

It belongs to the class-I aminoacyl-tRNA synthetase family. Monomer.

The protein resides in the cytoplasm. The catalysed reaction is tRNA(Arg) + L-arginine + ATP = L-arginyl-tRNA(Arg) + AMP + diphosphate. This chain is Arginine--tRNA ligase, found in Thermobifida fusca (strain YX).